The primary structure comprises 778 residues: Receptor like protein 28 (778 aa).

The first 24 residues, 1–24, serve as a signal peptide directing secretion; the sequence is MSGSHLRLRFLSLLLLCCVSSSTS. Residues 25-739 are Extracellular-facing; it reads SLFTFSYPVL…EEQEQVLNWK (715 aa). N-linked (GlcNAc...) asparagine glycosylation is found at Asn60, Asn72, Asn93, Asn106, Asn111, Asn147, Asn170, and Asn173. LRR repeat units lie at residues 99–123, 125–147, 148–171, 172–195, and 197–219; these read FHQLRFLNLSHNNFTSTSFPSEFGN, NKVEVLDLSFNSFTGQVPSSFSN, LSQLTELHLSNNQLTGGFPQVQNL, TNLSHLDFENNKFSGTVPSSLLMM, and FLSYLNLYGNHFTGSIEVSTSSK. An LRR 6; degenerate repeat occupies 220–240; the sequence is LEILYLGLKPFEGQILEPISK. 6 LRR repeats span residues 241-265, 266-291, 293-313, 314-338, 340-363, and 364-387; these read LINLKRLELSFLNISYPLDLNLFSS, LKSLTYLDLSGNSISPRSLRSDLYIP, TLEKLLLEQCGIIEFPNILKT, LQKLEYIDMSNNRINGKIPEWLWRL, RLRSMSLANNSFNGFEGSTDVLVN, and SSMEILFMHSNNIQGALPNLPLSI. Asn253 carries an N-linked (GlcNAc...) asparagine glycan. N-linked (GlcNAc...) asparagine glycosylation is found at Asn348 and Asn363. One copy of the LRR 13; degenerate repeat lies at 388–407; the sequence is KAFSAGYNNFSGEIPLSICN. N-linked (GlcNAc...) asparagine glycosylation is found at Asn396, Asn407, Asn420, Asn431, and Asn476. LRR repeat units follow at residues 408 to 429, 430 to 453, 455 to 477, 479 to 500, 501 to 525, 528 to 552, 601 to 625, 626 to 649, 650 to 673, and 678 to 700; these read RSSLAALSLPYNNFTGKIPQCL, SNLTFVHLRKNNLEGSIPDTLCAG, SLQTLDIGFNLISGTLPRSLLNC, SLEFLSVDNNRIKDTFPFWLKA, LPNLQVLILSSNKLYGPIAPPHQSP, FPELRIFEIADNMFTGTLSPRYFVN, LNSYSAIDFSGNRLEGQIPKSIGLL, KELIALNLSNNAFTCHIPLSLANA, TELESLDLSRNQLSGTIPNGLKTL, and YINVSHNKLKGTQIIGQHKSSFE. N-linked (GlcNAc...) asparagine glycosylation is found at Asn632 and Asn648. Asn680 is a glycosylation site (N-linked (GlcNAc...) asparagine). The helical transmembrane segment at 740–760 threads the bilayer; the sequence is AVATGYGTGLLLGLAIAQVIA. The Cytoplasmic portion of the chain corresponds to 761–778; the sequence is SYKPDWLVKIIGLFRFCF.

Belongs to the RLP family.

It is found in the cell membrane. This is Receptor like protein 28 from Arabidopsis thaliana (Mouse-ear cress).